We begin with the raw amino-acid sequence, 127 residues long: Protein ApaG (127 aa).

Positions 3–127 constitute an ApaG domain; it reads KTSIPDFQIT…FYLIAPLALH (125 aa).

In Bdellovibrio bacteriovorus (strain ATCC 15356 / DSM 50701 / NCIMB 9529 / HD100), this protein is Protein ApaG.